A 323-amino-acid polypeptide reads, in one-letter code: MTDLPSSGPRPGEPLSRVGHRLLLVHAHPDDESINNGATMAKYAAEGARVTLVTCTLGEEGEVIPPSLAHLAPDRDDTLGPYRVDELAGAMKELGVTDHRFLGGAGRYRDSGMMGVEQNERPGAFWSADVDEAAAHLVRVVREVRPQVLVTYDPDGGYGHPDHIQAHRVAMRAAGLAADPAFRPDLGEPWDIAKVYWNRVPRGVVLEGFERLRRDLAEPGRVPFRQAASVTDVPGVVDDHLVTTEIDGTGFAAAKAAAMRAHATQIEVAEPYFALSNALAQPLLSTEYYELVRGRREGGSRESDLFEGIPGISFEERQNGTAL.

Zn(2+)-binding residues include histidine 28, aspartate 31, and histidine 163.

The protein belongs to the MshB deacetylase family. Zn(2+) serves as cofactor.

It catalyses the reaction 1D-myo-inositol 2-acetamido-2-deoxy-alpha-D-glucopyranoside + H2O = 1D-myo-inositol 2-amino-2-deoxy-alpha-D-glucopyranoside + acetate. In terms of biological role, catalyzes the deacetylation of 1D-myo-inositol 2-acetamido-2-deoxy-alpha-D-glucopyranoside (GlcNAc-Ins) in the mycothiol biosynthesis pathway. The protein is 1D-myo-inositol 2-acetamido-2-deoxy-alpha-D-glucopyranoside deacetylase of Streptomyces scabiei (strain 87.22).